Here is a 198-residue protein sequence, read N- to C-terminus: FMN-dependent NADH:quinone oxidoreductase (198 aa).

Serine 10 provides a ligand contact to FMN.

Belongs to the azoreductase type 1 family. As to quaternary structure, homodimer. FMN serves as cofactor.

It catalyses the reaction 2 a quinone + NADH + H(+) = 2 a 1,4-benzosemiquinone + NAD(+). The enzyme catalyses N,N-dimethyl-1,4-phenylenediamine + anthranilate + 2 NAD(+) = 2-(4-dimethylaminophenyl)diazenylbenzoate + 2 NADH + 2 H(+). In terms of biological role, quinone reductase that provides resistance to thiol-specific stress caused by electrophilic quinones. Its function is as follows. Also exhibits azoreductase activity. Catalyzes the reductive cleavage of the azo bond in aromatic azo compounds to the corresponding amines. This is FMN-dependent NADH:quinone oxidoreductase from Paraburkholderia phymatum (strain DSM 17167 / CIP 108236 / LMG 21445 / STM815) (Burkholderia phymatum).